The chain runs to 253 residues: uncharacterized protein (253 aa).

Ala-2 bears the N-acetylalanine mark.

Belongs to the NAD(P)-dependent epimerase/dehydratase family. Homodimer.

This is an uncharacterized protein from Arabidopsis thaliana (Mouse-ear cress).